A 458-amino-acid chain; its full sequence is Succinate-semialdehyde dehydrogenase [NADP(+)] 1 (458 aa).

Residues 134 to 135 (WN), 158 to 161 (KHAS), and 210 to 211 (GS) each bind NADP(+). The active-site Proton acceptor is the Glu-232. Residue Leu-233 participates in NADP(+) binding. Cys-266 acts as the Nucleophile in catalysis. NADP(+) is bound at residue Glu-363.

This sequence belongs to the aldehyde dehydrogenase family.

It catalyses the reaction succinate semialdehyde + NADP(+) + H2O = succinate + NADPH + 2 H(+). Its function is as follows. Catalyzes the NADP(+)-dependent oxidation of succinate semialdehyde to succinate. It is believed to be the main source of succinate semialdehyde dehydrogenase activity in Mycobacterium. The polypeptide is Succinate-semialdehyde dehydrogenase [NADP(+)] 1 (gabD1) (Mycobacterium ulcerans (strain Agy99)).